The chain runs to 350 residues: NADH-quinone oxidoreductase subunit H (350 aa).

Transmembrane regions (helical) follow at residues 5–25, 76–96, 118–138, 162–182, 190–210, 243–263, 284–304, and 319–339; these read FIIEKSVVIVVVFAVTMIMAM, FLFVVGPAIAMSTALMTSAVI, IALLYIFGVLSVGVYGIMIGG, IAMGLSMIALLMMTGTMSLKV, MNWNVFYQPLSFLIFLICSFA, LFAEYASMFISSTIISVLFFG, LLGIAVLFVKICFFIFFYMWV, and LGWRILIPLSIINIMITGAVI.

The protein belongs to the complex I subunit 1 family. As to quaternary structure, NDH-1 is composed of 14 different subunits. Subunits NuoA, H, J, K, L, M, N constitute the membrane sector of the complex.

Its subcellular location is the cell inner membrane. The catalysed reaction is a quinone + NADH + 5 H(+)(in) = a quinol + NAD(+) + 4 H(+)(out). NDH-1 shuttles electrons from NADH, via FMN and iron-sulfur (Fe-S) centers, to quinones in the respiratory chain. The immediate electron acceptor for the enzyme in this species is believed to be ubiquinone. Couples the redox reaction to proton translocation (for every two electrons transferred, four hydrogen ions are translocated across the cytoplasmic membrane), and thus conserves the redox energy in a proton gradient. This subunit may bind ubiquinone. This is NADH-quinone oxidoreductase subunit H from Flavobacterium johnsoniae (strain ATCC 17061 / DSM 2064 / JCM 8514 / BCRC 14874 / CCUG 350202 / NBRC 14942 / NCIMB 11054 / UW101) (Cytophaga johnsonae).